The chain runs to 593 residues: UvrABC system protein C (593 aa).

A GIY-YIG domain is found at 17–94 (MEPGCYLMKD…IKQYQPRYNI (78 aa)). The 36-residue stretch at 199–234 (KTILKSLEERMLTASESLDFERAKEYRDLIQHIQNL) folds into the UVR domain.

It belongs to the UvrC family. In terms of assembly, interacts with UvrB in an incision complex.

Its subcellular location is the cytoplasm. Its function is as follows. The UvrABC repair system catalyzes the recognition and processing of DNA lesions. UvrC both incises the 5' and 3' sides of the lesion. The N-terminal half is responsible for the 3' incision and the C-terminal half is responsible for the 5' incision. The sequence is that of UvrABC system protein C from Staphylococcus aureus (strain USA300).